A 407-amino-acid polypeptide reads, in one-letter code: Vancomycin aglycone glucosyltransferase (407 aa).

This sequence belongs to the glycosyltransferase 28 family.

The catalysed reaction is vancomycin aglycone + UDP-alpha-D-glucose = devancoaminyl-vancomycin + UDP. It functions in the pathway antibiotic biosynthesis; vancomycin biosynthesis. Glucosyltransferase that transfers glucose to the 4-OH-Phegly(4) residue of vancomycin aglycone (AGV) to produce devancoaminyl-vancomycin (DVV) in the biosynthesis of glycopeptide antibiotic chloroeremomycin, a member of the vancomycin group of antibiotics. The chain is Vancomycin aglycone glucosyltransferase (gtfB) from Amycolatopsis orientalis (Nocardia orientalis).